The chain runs to 152 residues: Biogenesis of lysosome-related organelles complex 1 subunit 1 (152 aa).

Belongs to the BLOC1S1 family. Component of the biogenesis of lysosome-related organelles complex-1 (BLOC-1). Interacts with BLOS2 and SNX1. In terms of tissue distribution, expressed in the whole plant (at protein level).

It is found in the cytoplasm. The protein resides in the endosome. In terms of biological role, component of the biogenesis of lysosome-related organelles complex-1 (BLOC-1), a complex that mediates the vacuolar degradative transport via the intracellular vesicle trafficking from the endosome to the vacuole. Probably regulates the PIN1 and PIN2 homeostasis through its interaction with SNX1. In Arabidopsis thaliana (Mouse-ear cress), this protein is Biogenesis of lysosome-related organelles complex 1 subunit 1 (BLOS1).